The chain runs to 471 residues: MPN domain-containing protein (471 aa).

The span at 1–10 (MAAPEPLSPA) shows a compositional bias: low complexity. The disordered stretch occupies residues 1–63 (MAAPEPLSPA…GGGGAGAGGC (63 aa)). An N-acetylalanine modification is found at Ala2. Ser8 carries the phosphoserine modification. Positions 16–29 (EAPEEDEDEAEAED) are enriched in acidic residues. Positions 36–63 (GAGGGRSGGGGSSVSGGGGGGGAGAGGC) are enriched in gly residues. The RAMA domain maps to 71–166 (TRRAVTLRVL…KYKATWLRLH (96 aa)). Positions 123, 125, and 145 each coordinate DNA. The disordered stretch occupies residues 170 to 229 (TPATAADESPASEGEEEELLMEEEEEDVLAGVSAEDKSRRPLGKSPSEPAHPEATTPGKR). A phosphoserine mark is found at Ser178 and Ser181. The segment covering 182–197 (EGEEEELLMEEEEEDV) has biased composition (acidic residues). One can recognise an MPN domain in the interval 272–407 (VAVSSNVLFL…PESKISPFWV (136 aa)). Zn(2+) contacts are provided by His349, His351, and Asp362. The short motif at 349 to 362 (HSHPHSPALPSLQD) is the JAMM motif element.

The protein belongs to the peptidase M67 family. Monomer. Mainly monomoric, but when binds to dsDNA, forms homotetramer assembled into two homodimers. May interact with histones; this interaction is facilitated by dsDNA binding. Post-translationally, degraded following binding to N(6)-methyladenosine methylated DNA (m6A).

In terms of biological role, probable protease. Acts as a sensor of N(6)-methyladenosine methylation on DNA (m6A): recognizes and binds m6A DNA, leading to its degradation. Binds only double strand DNA (dsDNA) in a sequence-independent manner. The chain is MPN domain-containing protein from Homo sapiens (Human).